A 698-amino-acid polypeptide reads, in one-letter code: Polyphosphate kinase (698 aa).

An ATP-binding site is contributed by Asn-63. 2 residues coordinate Mg(2+): Arg-390 and Arg-420. The Phosphohistidine intermediate role is filled by His-450. 3 residues coordinate ATP: Tyr-483, Arg-579, and His-607.

The protein belongs to the polyphosphate kinase 1 (PPK1) family. It depends on Mg(2+) as a cofactor. An intermediate of this reaction is the autophosphorylated ppk in which a phosphate is covalently linked to a histidine residue through a N-P bond.

It carries out the reaction [phosphate](n) + ATP = [phosphate](n+1) + ADP. Functionally, catalyzes the reversible transfer of the terminal phosphate of ATP to form a long-chain polyphosphate (polyP). This Xylella fastidiosa (strain Temecula1 / ATCC 700964) protein is Polyphosphate kinase.